Consider the following 206-residue polypeptide: Holliday junction branch migration complex subunit RuvA (206 aa).

A domain I region spans residues 1-62 (MYDYLKGLIT…EDAQVLYGFP (62 aa)). The segment at 63 to 141 (NLDQRELFRK…SLLETIELPS (79 aa)) is domain II. The segment at 142–152 (TEDELPLFGVH) is flexible linker. The segment at 153 to 206 (PYKHELEEAILALAALGYSEKELEKIRPLLEDNDKLETTDAYMKQALQLLLKLK) is domain III.

Belongs to the RuvA family. Homotetramer. Forms an RuvA(8)-RuvB(12)-Holliday junction (HJ) complex. HJ DNA is sandwiched between 2 RuvA tetramers; dsDNA enters through RuvA and exits via RuvB. An RuvB hexamer assembles on each DNA strand where it exits the tetramer. Each RuvB hexamer is contacted by two RuvA subunits (via domain III) on 2 adjacent RuvB subunits; this complex drives branch migration. In the full resolvosome a probable DNA-RuvA(4)-RuvB(12)-RuvC(2) complex forms which resolves the HJ.

It is found in the cytoplasm. In terms of biological role, the RuvA-RuvB-RuvC complex processes Holliday junction (HJ) DNA during genetic recombination and DNA repair, while the RuvA-RuvB complex plays an important role in the rescue of blocked DNA replication forks via replication fork reversal (RFR). RuvA specifically binds to HJ cruciform DNA, conferring on it an open structure. The RuvB hexamer acts as an ATP-dependent pump, pulling dsDNA into and through the RuvAB complex. HJ branch migration allows RuvC to scan DNA until it finds its consensus sequence, where it cleaves and resolves the cruciform DNA. The polypeptide is Holliday junction branch migration complex subunit RuvA (Lysinibacillus sphaericus (strain C3-41)).